A 185-amino-acid chain; its full sequence is Lipopolysaccharide export system protein LptA (185 aa).

The first 27 residues, 1–27 (MKFKTNKLSLNLVLASSLLAASIPAFA), serve as a signal peptide directing secretion. The segment at 166–185 (PSQLQDKNNKGQTPAQKKGN) is disordered.

The protein belongs to the LptA family. As to quaternary structure, component of the lipopolysaccharide transport and assembly complex.

It is found in the periplasm. In terms of biological role, involved in the assembly of lipopolysaccharide (LPS). Required for the translocation of LPS from the inner membrane to the outer membrane. May form a bridge between the inner membrane and the outer membrane, via interactions with LptC and LptD, thereby facilitating LPS transfer across the periplasm. The chain is Lipopolysaccharide export system protein LptA from Escherichia coli O157:H7.